The primary structure comprises 358 residues: DNA replication and repair protein RecF (358 aa).

30 to 37 (GANGSGKT) serves as a coordination point for ATP.

It belongs to the RecF family.

The protein resides in the cytoplasm. Its function is as follows. The RecF protein is involved in DNA metabolism; it is required for DNA replication and normal SOS inducibility. RecF binds preferentially to single-stranded, linear DNA. It also seems to bind ATP. This Edwardsiella ictaluri (strain 93-146) protein is DNA replication and repair protein RecF.